The following is a 311-amino-acid chain: Methionyl-tRNA formyltransferase (311 aa).

110-113 (SLLP) serves as a coordination point for (6S)-5,6,7,8-tetrahydrofolate.

The protein belongs to the Fmt family.

The enzyme catalyses L-methionyl-tRNA(fMet) + (6R)-10-formyltetrahydrofolate = N-formyl-L-methionyl-tRNA(fMet) + (6S)-5,6,7,8-tetrahydrofolate + H(+). Attaches a formyl group to the free amino group of methionyl-tRNA(fMet). The formyl group appears to play a dual role in the initiator identity of N-formylmethionyl-tRNA by promoting its recognition by IF2 and preventing the misappropriation of this tRNA by the elongation apparatus. In Streptococcus pneumoniae serotype 19F (strain G54), this protein is Methionyl-tRNA formyltransferase.